The primary structure comprises 77 residues: Large ribosomal subunit protein uL29 (77 aa).

Belongs to the universal ribosomal protein uL29 family.

The protein is Large ribosomal subunit protein uL29 of Mycolicibacterium vanbaalenii (strain DSM 7251 / JCM 13017 / BCRC 16820 / KCTC 9966 / NRRL B-24157 / PYR-1) (Mycobacterium vanbaalenii).